Consider the following 55-residue polypeptide: Ferredoxin-1 (55 aa).

4Fe-4S ferredoxin-type domains follow at residues 2 to 27 (YKIE…EQGD) and 28 to 55 (TIFV…PVAE). The [4Fe-4S] cluster site is built by Cys8, Cys11, Cys14, Cys18, Cys37, Cys40, Cys43, and Cys47.

Requires [4Fe-4S] cluster as cofactor.

Ferredoxins are iron-sulfur proteins that transfer electrons in a wide variety of metabolic reactions. The chain is Ferredoxin-1 from Rhodospirillum rubrum.